We begin with the raw amino-acid sequence, 566 residues long: Bicarbonate transporter BicA (566 aa).

Residues 1–15 (MQITNKIHFRNIRGD) lie on the Cytoplasmic side of the membrane. The helical transmembrane segment at 16–36 (IFGGLTAAVIALPMALAFGVA) threads the bilayer. At 37–42 (SGAGAE) the chain is on the periplasmic side. Residues 43–63 (AGLWGAVLVGFFAALFGGTPT) traverse the membrane as a helical segment. L64 is a topological domain (cytoplasmic). A helical transmembrane segment spans residues 65–85 (ISEPTGPMTVVMTAVIAHFTA). T69 is a binding site for hydrogencarbonate. The Periplasmic portion of the chain corresponds to 86 to 93 (SAATPEEG). Residues 94–114 (LAIAFTVVMMAGVFQIIFGSL) form a helical membrane-spanning segment. Topologically, residues 115–126 (KLGKYVTMMPYT) are cytoplasmic. The helical transmembrane segment at 127 to 147 (VISGFMSGIGIILVILQLAPF) threads the bilayer. At 148–169 (LGQASPGGGVIGTLQNLPTLLS) the chain is on the periplasmic side. The helical transmembrane segment at 170–190 (NIQPGETALALGTVAIIWFMP) threads the bilayer. Residues 191-196 (EKFKKV) are Cytoplasmic-facing. The chain crosses the membrane as a helical span at residues 197–217 (IPPQLVALVLGTVIAFFVFPP). The Periplasmic portion of the chain corresponds to 218 to 247 (EVSDLRRIGEIRAGFPELVRPSFSPVEFQR). A helical membrane pass occupies residues 248 to 268 (MILDAAVLGMLGCIDALLTSV). Na(+) contacts are provided by D262, T266, and G304. At 269–318 (VADSLTRTEHNSNKELIGQGLGNLFSGLFGGIAGAGATMGTVVNIQSGGR) the chain is on the cytoplasmic side. Hydrogencarbonate is bound at residue A305. Position 306 (T306) interacts with Na(+). A helical transmembrane segment spans residues 319–339 (TALSGLVRAFVLLVVILGAAS). L340 is a topological domain (periplasmic). A helical membrane pass occupies residues 341 to 361 (TATIPLAVLAGIAFKVGVDII). Residues 362–371 (DWSFLKRAHE) lie on the Cytoplasmic side of the membrane. A helical transmembrane segment spans residues 372-392 (ISPKGALIMYGVILLTVLVDL). I393 is a topological domain (periplasmic). Residues 394–414 (VAVGVGVFVANVLTIERMSNL) form a helical membrane-spanning segment. Topologically, residues 415-566 (QSEKVQTVSD…GVTAPSSEMG (152 aa)) are cytoplasmic. In terms of domain architecture, STAS spans 436-546 (KRWLDEGQGR…MSREEALKNA (111 aa)).

It belongs to the SLC26A/SulP transporter (TC 2.A.53) family.

The protein resides in the cell inner membrane. In terms of biological role, low/medium affinity, Na(+)-dependent bicarbonate transporter. This Picosynechococcus sp. (strain ATCC 27264 / PCC 7002 / PR-6) (Agmenellum quadruplicatum) protein is Bicarbonate transporter BicA (bicA).